We begin with the raw amino-acid sequence, 147 residues long: Large ribosomal subunit protein uL15 (147 aa).

The disordered stretch occupies residues 1–45; the sequence is MTIKLHHLRPAPGAKSDKIRVGRGEGGKRGKTAGRGTKGTKARKN. Residues 15–28 are compositionally biased toward basic and acidic residues; that stretch reads KSDKIRVGRGEGGK.

It belongs to the universal ribosomal protein uL15 family. Part of the 50S ribosomal subunit.

Its function is as follows. Binds to the 23S rRNA. This is Large ribosomal subunit protein uL15 from Rhodococcus jostii (strain RHA1).